Reading from the N-terminus, the 878-residue chain is Leucine--tRNA ligase (878 aa).

The short motif at 43–53 (PYPSGRIHIGH) is the 'HIGH' region element. The 'KMSKS' region signature appears at 630–634 (KMSKS). ATP is bound at residue lysine 633.

The protein belongs to the class-I aminoacyl-tRNA synthetase family.

It localises to the cytoplasm. It catalyses the reaction tRNA(Leu) + L-leucine + ATP = L-leucyl-tRNA(Leu) + AMP + diphosphate. In Nitrobacter hamburgensis (strain DSM 10229 / NCIMB 13809 / X14), this protein is Leucine--tRNA ligase.